Reading from the N-terminus, the 145-residue chain is Small ribosomal subunit protein uS19 (145 aa).

A2 carries the post-translational modification N-acetylalanine. K108 participates in a covalent cross-link: Glycyl lysine isopeptide (Lys-Gly) (interchain with G-Cter in SUMO2).

The protein belongs to the universal ribosomal protein uS19 family. In terms of assembly, component of the small ribosomal subunit.

It localises to the cytoplasm. In terms of biological role, component of the small ribosomal subunit. The ribosome is a large ribonucleoprotein complex responsible for the synthesis of proteins in the cell. This chain is Small ribosomal subunit protein uS19 (RPS15), found in Bos taurus (Bovine).